Consider the following 317-residue polypeptide: Small ribosomal subunit protein uS2 (317 aa).

Disordered stretches follow at residues 1–30 (MENE…ASKE) and 293–317 (RSFE…EVAE). The span at 18–30 (MAEKADDSKASKE) shows a compositional bias: basic and acidic residues. Low complexity predominate over residues 308 to 317 (KTTTSTEVAE).

Belongs to the universal ribosomal protein uS2 family.

This chain is Small ribosomal subunit protein uS2, found in Mycoplasmopsis agalactiae (strain NCTC 10123 / CIP 59.7 / PG2) (Mycoplasma agalactiae).